Here is a 187-residue protein sequence, read N- to C-terminus: Crossover junction endodeoxyribonuclease RuvC (187 aa).

Residues D7, E67, and D140 contribute to the active site. D7, E67, and D140 together coordinate Mg(2+).

Belongs to the RuvC family. Homodimer which binds Holliday junction (HJ) DNA. The HJ becomes 2-fold symmetrical on binding to RuvC with unstacked arms; it has a different conformation from HJ DNA in complex with RuvA. In the full resolvosome a probable DNA-RuvA(4)-RuvB(12)-RuvC(2) complex forms which resolves the HJ. Mg(2+) is required as a cofactor.

The protein resides in the cytoplasm. It carries out the reaction Endonucleolytic cleavage at a junction such as a reciprocal single-stranded crossover between two homologous DNA duplexes (Holliday junction).. The RuvA-RuvB-RuvC complex processes Holliday junction (HJ) DNA during genetic recombination and DNA repair. Endonuclease that resolves HJ intermediates. Cleaves cruciform DNA by making single-stranded nicks across the HJ at symmetrical positions within the homologous arms, yielding a 5'-phosphate and a 3'-hydroxyl group; requires a central core of homology in the junction. The consensus cleavage sequence is 5'-(A/T)TT(C/G)-3'. Cleavage occurs on the 3'-side of the TT dinucleotide at the point of strand exchange. HJ branch migration catalyzed by RuvA-RuvB allows RuvC to scan DNA until it finds its consensus sequence, where it cleaves and resolves the cruciform DNA. The chain is Crossover junction endodeoxyribonuclease RuvC from Prosthecochloris aestuarii (strain DSM 271 / SK 413).